Reading from the N-terminus, the 441-residue chain is Homogentisate 1,2-dioxygenase (441 aa).

The Proton acceptor role is filled by histidine 287. Positions 330 and 336 each coordinate Fe cation. Residues tyrosine 345 and histidine 366 each contribute to the homogentisate site. Histidine 366 is a binding site for Fe cation.

This sequence belongs to the homogentisate dioxygenase family. Hexamer; dimer of trimers. Requires Fe cation as cofactor.

The catalysed reaction is homogentisate + O2 = 4-maleylacetoacetate + H(+). Its pathway is amino-acid degradation; L-phenylalanine degradation; acetoacetate and fumarate from L-phenylalanine: step 4/6. Its function is as follows. Involved in the catabolism of homogentisate (2,5-dihydroxyphenylacetate or 2,5-OH-PhAc), a central intermediate in the degradation of phenylalanine and tyrosine. Catalyzes the oxidative ring cleavage of the aromatic ring of homogentisate to yield maleylacetoacetate. This is Homogentisate 1,2-dioxygenase from Xanthomonas oryzae pv. oryzae (strain KACC10331 / KXO85).